The following is a 332-amino-acid chain: 2,3-diketo-L-gulonate reductase (332 aa).

Residue histidine 44 is the Proton donor of the active site. Residues 168-174 (ITMVDMS), 224-225 (WK), and 304-306 (GHE) each bind NAD(+).

Belongs to the LDH2/MDH2 oxidoreductase family. DlgD subfamily. Homodimer.

It localises to the cytoplasm. It catalyses the reaction 3-dehydro-L-gulonate + NAD(+) = 2,3-dioxo-L-gulonate + NADH + H(+). It carries out the reaction 3-dehydro-L-gulonate + NADP(+) = 2,3-dioxo-L-gulonate + NADPH + H(+). Its function is as follows. Catalyzes the reduction of 2,3-diketo-L-gulonate in the presence of NADH, to form 3-keto-L-gulonate. This chain is 2,3-diketo-L-gulonate reductase, found in Salmonella paratyphi C (strain RKS4594).